The sequence spans 1079 residues: Translation initiation factor IF-2 (1079 aa).

3 stretches are compositionally biased toward basic and acidic residues: residues 52 to 65 (VQAQ…KEGN), 75 to 90 (RDGD…KAPE), and 102 to 134 (APER…KEPQ). The segment at 52 to 488 (VQAQRDGGAR…RGKKDVRPAA (437 aa)) is disordered. Residues 150 to 184 (APVAKVVEAAPAETPAPEAPAVKATVTAEAAPAKT) are compositionally biased toward low complexity. Positions 185–194 (VEPESERPQA) are enriched in basic and acidic residues. Residues 276 to 291 (AAVAQQQMQQQAAQQQ) are compositionally biased toward low complexity. The span at 306 to 327 (GGYRPEGQREGGYRPEGQREGG) shows a compositional bias: basic and acidic residues. Composition is skewed to low complexity over residues 348-370 (EGGY…GPRP) and 380-398 (PGAP…APRP). Positions 419–429 (PRPGGFGGAPG) are enriched in gly residues. Residues 461–471 (PRGRSDDDVMR) show a composition bias toward basic and acidic residues. Over residues 473 to 482 (PRGRGKRGKK) the composition is skewed to basic residues. One can recognise a tr-type G domain in the interval 578 to 745 (TRPPVVTIMG…LIAIQAEILE (168 aa)). Positions 587–594 (GHVDHGKT) are G1. Residue 587-594 (GHVDHGKT) participates in GTP binding. The G2 stretch occupies residues 612-616 (GITQH). Residues 633 to 636 (DTPG) form a G3 region. GTP is bound by residues 633 to 637 (DTPGH) and 687 to 690 (NKMD). The tract at residues 687–690 (NKMD) is G4. The G5 stretch occupies residues 723 to 725 (SAK).

Belongs to the TRAFAC class translation factor GTPase superfamily. Classic translation factor GTPase family. IF-2 subfamily.

It localises to the cytoplasm. Its function is as follows. One of the essential components for the initiation of protein synthesis. Protects formylmethionyl-tRNA from spontaneous hydrolysis and promotes its binding to the 30S ribosomal subunits. Also involved in the hydrolysis of GTP during the formation of the 70S ribosomal complex. In Nitratidesulfovibrio vulgaris (strain DP4) (Desulfovibrio vulgaris), this protein is Translation initiation factor IF-2.